The sequence spans 244 residues: Probable transcriptional regulatory protein BT0025 (244 aa).

It belongs to the TACO1 family.

It is found in the cytoplasm. This Borrelia turicatae (strain 91E135) protein is Probable transcriptional regulatory protein BT0025.